We begin with the raw amino-acid sequence, 921 residues long: Isoleucine--tRNA ligase (921 aa).

Residues 57–67 (PYANGDIHMGH) carry the 'HIGH' region motif. Glu552 contacts L-isoleucyl-5'-AMP. Positions 593–597 (KMSKS) match the 'KMSKS' region motif. Lys596 is a binding site for ATP. Residues Cys888, Cys891, Cys908, and Cys911 each coordinate Zn(2+).

This sequence belongs to the class-I aminoacyl-tRNA synthetase family. IleS type 1 subfamily. Monomer. It depends on Zn(2+) as a cofactor.

The protein localises to the cytoplasm. It carries out the reaction tRNA(Ile) + L-isoleucine + ATP = L-isoleucyl-tRNA(Ile) + AMP + diphosphate. Its function is as follows. Catalyzes the attachment of isoleucine to tRNA(Ile). As IleRS can inadvertently accommodate and process structurally similar amino acids such as valine, to avoid such errors it has two additional distinct tRNA(Ile)-dependent editing activities. One activity is designated as 'pretransfer' editing and involves the hydrolysis of activated Val-AMP. The other activity is designated 'posttransfer' editing and involves deacylation of mischarged Val-tRNA(Ile). This is Isoleucine--tRNA ligase from Bacillus cereus (strain AH187).